The following is a 1082-amino-acid chain: Inner tegument protein (1082 aa).

Residues 604 to 1082 form an interaction with large tegument protein region; sequence DHIECLFNVS…QQDLITPLKF (479 aa).

The protein belongs to the herpesviridae inner tegument protein family. As to quaternary structure, interacts (via C-terminus) with the large tegument protein/LTP (via N-terminus).

It localises to the virion tegument. The protein localises to the host cytoplasm. It is found in the host nucleus. Its subcellular location is the host Golgi apparatus. The protein resides in the host trans-Golgi network. In terms of biological role, plays an essential role in cytoplasmic secondary envelopment during viral egress. Interacts with the capsid via the large tegument protein/LTP and participates in its transport to the host trans-Golgi network (TGN) where secondary envelopment occurs. Modulates tegumentation and capsid accumulation at the viral assembly complex. This is Inner tegument protein (U30) from Homo sapiens (Human).